The sequence spans 200 residues: NADH-quinone oxidoreductase subunit C 1 (200 aa).

Belongs to the complex I 30 kDa subunit family. NDH-1 is composed of 14 different subunits. Subunits NuoB, C, D, E, F, and G constitute the peripheral sector of the complex.

It localises to the cell inner membrane. It carries out the reaction a quinone + NADH + 5 H(+)(in) = a quinol + NAD(+) + 4 H(+)(out). In terms of biological role, NDH-1 shuttles electrons from NADH, via FMN and iron-sulfur (Fe-S) centers, to quinones in the respiratory chain. The immediate electron acceptor for the enzyme in this species is believed to be ubiquinone. Couples the redox reaction to proton translocation (for every two electrons transferred, four hydrogen ions are translocated across the cytoplasmic membrane), and thus conserves the redox energy in a proton gradient. The polypeptide is NADH-quinone oxidoreductase subunit C 1 (Rhizobium etli (strain CIAT 652)).